A 664-amino-acid polypeptide reads, in one-letter code: Transketolase 1 (664 aa).

Histidine 26 is a binding site for substrate. Residues histidine 66 and 114–116 (GPL) each bind thiamine diphosphate. Aspartate 155 is a binding site for Mg(2+). Glycine 156 and asparagine 185 together coordinate thiamine diphosphate. Residues asparagine 185 and isoleucine 187 each coordinate Mg(2+). Substrate contacts are provided by histidine 260, arginine 357, and serine 384. Histidine 260 is a binding site for thiamine diphosphate. Glutamate 411 acts as the Proton donor in catalysis. Position 437 (phenylalanine 437) interacts with thiamine diphosphate. Histidine 461, aspartate 469, and arginine 520 together coordinate substrate.

Belongs to the transketolase family. As to quaternary structure, homodimer. It depends on Mg(2+) as a cofactor. Ca(2+) serves as cofactor. Mn(2+) is required as a cofactor. Requires Co(2+) as cofactor. The cofactor is thiamine diphosphate.

It catalyses the reaction D-sedoheptulose 7-phosphate + D-glyceraldehyde 3-phosphate = aldehydo-D-ribose 5-phosphate + D-xylulose 5-phosphate. Catalyzes the transfer of a two-carbon ketol group from a ketose donor to an aldose acceptor, via a covalent intermediate with the cofactor thiamine pyrophosphate. The chain is Transketolase 1 (tkt1) from Aliivibrio fischeri (strain ATCC 700601 / ES114) (Vibrio fischeri).